Consider the following 465-residue polypeptide: tRNA modification GTPase MnmE (465 aa).

Arginine 24, glutamate 84, and lysine 127 together coordinate (6S)-5-formyl-5,6,7,8-tetrahydrofolate. One can recognise a TrmE-type G domain in the interval glycine 223 to glycine 383. Asparagine 233 provides a ligand contact to K(+). GTP contacts are provided by residues asparagine 233–serine 238, threonine 252–threonine 258, and aspartate 277–glycine 280. Serine 237 contributes to the Mg(2+) binding site. Residues threonine 252, isoleucine 254, and threonine 257 each contribute to the K(+) site. Threonine 258 is a binding site for Mg(2+). Lysine 465 contacts (6S)-5-formyl-5,6,7,8-tetrahydrofolate.

Belongs to the TRAFAC class TrmE-Era-EngA-EngB-Septin-like GTPase superfamily. TrmE GTPase family. In terms of assembly, homodimer. Heterotetramer of two MnmE and two MnmG subunits. Requires K(+) as cofactor.

It is found in the cytoplasm. In terms of biological role, exhibits a very high intrinsic GTPase hydrolysis rate. Involved in the addition of a carboxymethylaminomethyl (cmnm) group at the wobble position (U34) of certain tRNAs, forming tRNA-cmnm(5)s(2)U34. This is tRNA modification GTPase MnmE from Janthinobacterium sp. (strain Marseille) (Minibacterium massiliensis).